Consider the following 468-residue polypeptide: Trehalose-2-sulfate acyltransferase PapA2 (468 aa).

The protein belongs to the PapA acyltransferase family.

It catalyses the reaction 2-O-sulfo-alpha,alpha-trehalose + hexadecanoyl-CoA = 2-O-sulfo-2'-O-hexadecanoyl-alpha,alpha-trehalose + CoA. Its function is as follows. Catalyzes the acylation of trehalose-2-sulfate by adding the palmitoyl group at the 2'-position to yield the intermediate trehalose-2-sulfate-2'-palmitate (SL659). In Mycobacterium tuberculosis (strain ATCC 25177 / H37Ra), this protein is Trehalose-2-sulfate acyltransferase PapA2 (papA2).